Here is a 213-residue protein sequence, read N- to C-terminus: Proteasome subunit beta 1 (213 aa).

A propeptide spans 1–18 (MVFIAVFNGVFAMSSLPG) (removed in mature form; by autocatalysis). Threonine 19 acts as the Nucleophile in catalysis.

The protein belongs to the peptidase T1B family. In terms of assembly, the 20S proteasome core is composed of 14 alpha and 14 beta subunits that assemble into four stacked heptameric rings, resulting in a barrel-shaped structure. The two inner rings, each composed of seven catalytic beta subunits, are sandwiched by two outer rings, each composed of seven alpha subunits. The catalytic chamber with the active sites is on the inside of the barrel. Has a gated structure, the ends of the cylinder being occluded by the N-termini of the alpha-subunits. Is capped at one or both ends by the proteasome regulatory ATPase, PAN.

The protein localises to the cytoplasm. It carries out the reaction Cleavage of peptide bonds with very broad specificity.. Its activity is regulated as follows. The formation of the proteasomal ATPase PAN-20S proteasome complex, via the docking of the C-termini of PAN into the intersubunit pockets in the alpha-rings, triggers opening of the gate for substrate entry. Interconversion between the open-gate and close-gate conformations leads to a dynamic regulation of the 20S proteasome proteolysis activity. In terms of biological role, component of the proteasome core, a large protease complex with broad specificity involved in protein degradation. The sequence is that of Proteasome subunit beta 1 from Staphylothermus marinus (strain ATCC 43588 / DSM 3639 / JCM 9404 / F1).